Consider the following 258-residue polypeptide: Pimeloyl-[acyl-carrier protein] methyl ester esterase (258 aa).

Residues 16-242 (LVLLHGWGLN…AAHAPFISHP (227 aa)) enclose the AB hydrolase-1 domain. Substrate contacts are provided by residues W22, 82 to 83 (SM), and 143 to 147 (FLALQ). The active-site Nucleophile is the S82. Catalysis depends on residues D207 and H235. H235 serves as a coordination point for substrate.

Belongs to the AB hydrolase superfamily. Carboxylesterase BioH family. In terms of assembly, monomer.

It is found in the cytoplasm. The catalysed reaction is 6-carboxyhexanoyl-[ACP] methyl ester + H2O = 6-carboxyhexanoyl-[ACP] + methanol + H(+). It functions in the pathway cofactor biosynthesis; biotin biosynthesis. Functionally, the physiological role of BioH is to remove the methyl group introduced by BioC when the pimeloyl moiety is complete. It allows to synthesize pimeloyl-ACP via the fatty acid synthetic pathway through the hydrolysis of the ester bonds of pimeloyl-ACP esters. This chain is Pimeloyl-[acyl-carrier protein] methyl ester esterase, found in Yersinia pseudotuberculosis serotype O:1b (strain IP 31758).